The chain runs to 230 residues: Cytochrome c oxidase subunit 2 (230 aa).

The Mitochondrial intermembrane portion of the chain corresponds to 1 to 29 (NNFFQGYNLLFQHSLFASYMDWFHAFNCS). Residues 30–50 (LLLGVLVFVTLLFGYLIFSTF) traverse the membrane as a helical segment. The Mitochondrial matrix portion of the chain corresponds to 51–63 (YFKSKKIEYQFGE). A helical transmembrane segment spans residues 64-84 (LLCSIFPTIILLMQMVPSLSL). Residues 85-230 (LYYYGLMNLD…FKSWCFGTME (146 aa)) lie on the Mitochondrial intermembrane side of the membrane. Residues His-163, Cys-198, Glu-200, Cys-202, His-206, and Met-209 each coordinate Cu cation. Residue Glu-200 participates in Mg(2+) binding.

The protein belongs to the cytochrome c oxidase subunit 2 family. In terms of assembly, component of the cytochrome c oxidase (complex IV, CIV), a multisubunit enzyme composed of a catalytic core of 3 subunits and several supernumerary subunits. The complex exists as a monomer or a dimer and forms supercomplexes (SCs) in the inner mitochondrial membrane with ubiquinol-cytochrome c oxidoreductase (cytochrome b-c1 complex, complex III, CIII). Cu cation serves as cofactor.

It is found in the mitochondrion inner membrane. The catalysed reaction is 4 Fe(II)-[cytochrome c] + O2 + 8 H(+)(in) = 4 Fe(III)-[cytochrome c] + 2 H2O + 4 H(+)(out). Functionally, component of the cytochrome c oxidase, the last enzyme in the mitochondrial electron transport chain which drives oxidative phosphorylation. The respiratory chain contains 3 multisubunit complexes succinate dehydrogenase (complex II, CII), ubiquinol-cytochrome c oxidoreductase (cytochrome b-c1 complex, complex III, CIII) and cytochrome c oxidase (complex IV, CIV), that cooperate to transfer electrons derived from NADH and succinate to molecular oxygen, creating an electrochemical gradient over the inner membrane that drives transmembrane transport and the ATP synthase. Cytochrome c oxidase is the component of the respiratory chain that catalyzes the reduction of oxygen to water. Electrons originating from reduced cytochrome c in the intermembrane space (IMS) are transferred via the dinuclear copper A center (CU(A)) of subunit 2 and heme A of subunit 1 to the active site in subunit 1, a binuclear center (BNC) formed by heme A3 and copper B (CU(B)). The BNC reduces molecular oxygen to 2 water molecules using 4 electrons from cytochrome c in the IMS and 4 protons from the mitochondrial matrix. The chain is Cytochrome c oxidase subunit 2 (cox-2) from Caenorhabditis remanei (Caenorhabditis vulgaris).